Reading from the N-terminus, the 509-residue chain is Sensor histidine kinase TrcS (509 aa).

Helical transmembrane passes span L24–V44 and V188–Y208. The 63-residue stretch at G207 to A269 folds into the HAMP domain. One can recognise a Histidine kinase domain in the interval D284–E502. H287 is modified (phosphohistidine; by autocatalysis).

It depends on a divalent metal cation as a cofactor. Post-translationally, autophosphorylated.

The protein resides in the cell membrane. The enzyme catalyses ATP + protein L-histidine = ADP + protein N-phospho-L-histidine.. In terms of biological role, member of the two-component regulatory system TrcS/TrcR. Phosphorylates TrcR. The TrcR-TrcS regulatory system may act as a transition regulatory system involved in adapting to an intracellular environment and transitioning from latency to reactivation. The protein is Sensor histidine kinase TrcS of Mycobacterium tuberculosis (strain ATCC 25618 / H37Rv).